A 718-amino-acid chain; its full sequence is Polyribonucleotide nucleotidyltransferase (718 aa).

2 residues coordinate Mg(2+): Asp496 and Asp502. In terms of domain architecture, KH spans 563-622 (PRLLTIKIDSDMIGLVIGPGGKTIKGITEETGAKIDIEDDGTVTISAVDENKAKRARNII). The 69-residue stretch at 632–700 (GDVYAGRITR…NKGRINLTRL (69 aa)) folds into the S1 motif domain.

Belongs to the polyribonucleotide nucleotidyltransferase family. Mg(2+) serves as cofactor.

It localises to the cytoplasm. It carries out the reaction RNA(n+1) + phosphate = RNA(n) + a ribonucleoside 5'-diphosphate. Functionally, involved in mRNA degradation. Catalyzes the phosphorolysis of single-stranded polyribonucleotides processively in the 3'- to 5'-direction. The protein is Polyribonucleotide nucleotidyltransferase of Nostoc punctiforme (strain ATCC 29133 / PCC 73102).